The primary structure comprises 349 residues: Phloroglucinol synthase (349 aa).

Cys138 is an active-site residue.

The protein belongs to the thiolase-like superfamily. Chalcone/stilbene synthases family.

The catalysed reaction is 3 malonyl-CoA + 3 H(+) = 1,3,5-trihydroxybenzene + 3 CO2 + 3 CoA. Its pathway is antibiotic biosynthesis. Functionally, type III polyketide synthase that catalyzes the synthesis of phloroglucinol from three molecules of malonyl-CoA. In addition to its ability to produce phloroglucinol from malonyl-CoA, it exhibits broad substrate specificity, accepting C4-C12 aliphatic acyl-CoAs and phenylacetyl-CoA as the starters to form C6-polyoxoalkylated alpha-pyrones from sequential condensation with malonyl-CoA. The sequence is that of Phloroglucinol synthase from Pseudomonas fluorescens (strain ATCC BAA-477 / NRRL B-23932 / Pf-5).